The following is a 435-amino-acid chain: Gamma-glutamyl phosphate reductase (435 aa).

Belongs to the gamma-glutamyl phosphate reductase family.

It localises to the cytoplasm. It catalyses the reaction L-glutamate 5-semialdehyde + phosphate + NADP(+) = L-glutamyl 5-phosphate + NADPH + H(+). The protein operates within amino-acid biosynthesis; L-proline biosynthesis; L-glutamate 5-semialdehyde from L-glutamate: step 2/2. In terms of biological role, catalyzes the NADPH-dependent reduction of L-glutamate 5-phosphate into L-glutamate 5-semialdehyde and phosphate. The product spontaneously undergoes cyclization to form 1-pyrroline-5-carboxylate. This chain is Gamma-glutamyl phosphate reductase, found in Parasynechococcus marenigrum (strain WH8102).